The following is a 293-amino-acid chain: Indole-3-glycerol phosphate synthase (293 aa).

Belongs to the TrpC family.

It catalyses the reaction 1-(2-carboxyphenylamino)-1-deoxy-D-ribulose 5-phosphate + H(+) = (1S,2R)-1-C-(indol-3-yl)glycerol 3-phosphate + CO2 + H2O. Its pathway is amino-acid biosynthesis; L-tryptophan biosynthesis; L-tryptophan from chorismate: step 4/5. The polypeptide is Indole-3-glycerol phosphate synthase (Rippkaea orientalis (strain PCC 8801 / RF-1) (Cyanothece sp. (strain PCC 8801))).